A 391-amino-acid chain; its full sequence is MAERVRVRVRKKKKSKRRKILKRIMLLFALALLVVVGLGGYKLYKTINAADESYDALSRGNKSNLRNEVVDMKKKPFSILFMGIEDYATKGQKGRSDSLIVVTLDPKNKTMKMLSIPRDTRVQLAGDTTGSKTKINAAYSKGGKDETVETVENFLQIPIDKYVTVDFDGFKDVINEVGGIDVDVPFDFDEKSDVDESKRIYFKKGEMHLNGEEALAYARMRKQDKRGDFGRNDRQKQILNALIDRMSSASNIAKIDKIAEKASENVETNIRITEGLALQQIYSGFTSKKIDTLSITGSDLYLGPNNTYYFEPDATNLEKVRKTLQEHLDYTPDTSTGTSGTEDGTDSSSSSGSTGSTGTTTDGTTNGSSYSNDSSTSSNNSTTNSTTDSSY.

Residues 1–23 are Cytoplasmic-facing; it reads MAERVRVRVRKKKKSKRRKILKR. Residues 24–44 form a helical; Signal-anchor for type II membrane protein membrane-spanning segment; that stretch reads IMLLFALALLVVVGLGGYKLY. Topologically, residues 45–391 are extracellular; that stretch reads KTINAADESY…TTNSTTDSSY (347 aa). The tract at residues 329–391 is disordered; that stretch reads DYTPDTSTGT…TTNSTTDSSY (63 aa). Residues 333–391 show a composition bias toward low complexity; sequence DTSTGTSGTEDGTDSSSSSGSTGSTGTTTDGTTNGSSYSNDSSTSSNNSTTNSTTDSSY.

Belongs to the LytR/CpsA/Psr (LCP) family.

The protein resides in the cell membrane. It functions in the pathway cell wall biogenesis. May catalyze the final step in cell wall teichoic acid biosynthesis, the transfer of the anionic cell wall polymers (APs) from their lipid-linked precursor to the cell wall peptidoglycan (PG). The chain is Polyisoprenyl-teichoic acid--peptidoglycan teichoic acid transferase TagV from Bacillus subtilis (strain 168).